We begin with the raw amino-acid sequence, 542 residues long: CTP synthase (542 aa).

Residues 1-265 (MTRYIFVTGG…DQLVIERFGL (265 aa)) are amidoligase domain. Position 13 (S13) interacts with CTP. S13 contributes to the UTP binding site. ATP is bound by residues 14 to 19 (SLGKGI) and D71. 2 residues coordinate Mg(2+): D71 and E139. Residues 146–148 (DIE), 186–191 (KTKPTQ), and K222 contribute to the CTP site. UTP is bound by residues 186-191 (KTKPTQ) and K222. A Glutamine amidotransferase type-1 domain is found at 290 to 541 (TIAMVGKYME…VEAALANKKG (252 aa)). Residue G351 participates in L-glutamine binding. The active-site Nucleophile; for glutamine hydrolysis is C378. L-glutamine is bound by residues 379–382 (LGMQ), E402, and R469. Active-site residues include H514 and E516.

The protein belongs to the CTP synthase family. In terms of assembly, homotetramer.

The enzyme catalyses UTP + L-glutamine + ATP + H2O = CTP + L-glutamate + ADP + phosphate + 2 H(+). It catalyses the reaction L-glutamine + H2O = L-glutamate + NH4(+). It carries out the reaction UTP + NH4(+) + ATP = CTP + ADP + phosphate + 2 H(+). The protein operates within pyrimidine metabolism; CTP biosynthesis via de novo pathway; CTP from UDP: step 2/2. With respect to regulation, allosterically activated by GTP, when glutamine is the substrate; GTP has no effect on the reaction when ammonia is the substrate. The allosteric effector GTP functions by stabilizing the protein conformation that binds the tetrahedral intermediate(s) formed during glutamine hydrolysis. Inhibited by the product CTP, via allosteric rather than competitive inhibition. Functionally, catalyzes the ATP-dependent amination of UTP to CTP with either L-glutamine or ammonia as the source of nitrogen. Regulates intracellular CTP levels through interactions with the four ribonucleotide triphosphates. The sequence is that of CTP synthase from Marinobacter nauticus (strain ATCC 700491 / DSM 11845 / VT8) (Marinobacter aquaeolei).